The chain runs to 205 residues: Leucyl/phenylalanyl-tRNA--protein transferase (205 aa).

This sequence belongs to the L/F-transferase family.

The protein resides in the cytoplasm. The catalysed reaction is N-terminal L-lysyl-[protein] + L-leucyl-tRNA(Leu) = N-terminal L-leucyl-L-lysyl-[protein] + tRNA(Leu) + H(+). It catalyses the reaction N-terminal L-arginyl-[protein] + L-leucyl-tRNA(Leu) = N-terminal L-leucyl-L-arginyl-[protein] + tRNA(Leu) + H(+). The enzyme catalyses L-phenylalanyl-tRNA(Phe) + an N-terminal L-alpha-aminoacyl-[protein] = an N-terminal L-phenylalanyl-L-alpha-aminoacyl-[protein] + tRNA(Phe). In terms of biological role, functions in the N-end rule pathway of protein degradation where it conjugates Leu, Phe and, less efficiently, Met from aminoacyl-tRNAs to the N-termini of proteins containing an N-terminal arginine or lysine. The chain is Leucyl/phenylalanyl-tRNA--protein transferase from Mesorhizobium japonicum (strain LMG 29417 / CECT 9101 / MAFF 303099) (Mesorhizobium loti (strain MAFF 303099)).